A 207-amino-acid polypeptide reads, in one-letter code: MVSLGHVLFVILLPVLLPVAADDPDDQMLSQISLPSSSRSEYDDNDVSKRVFCNGFTGCGGRHRDRSRRQERYGKRLIPVLAKRPFCNSFGCYNGKRSLSGAGPALSTPVDPSRNNKARTMARMLDAAASARHEQQQQLLQQREQRGLESRDPAASGDLSKRLFCNGYGGCRGGKRTLYSPWLERMNEVADDRSARNALCTRLGWRE.

Residues 1-21 (MVSLGHVLFVILLPVLLPVAA) form the signal peptide. The propeptide occupies 22–48 (DDPDDQMLSQISLPSSSRSEYDDNDVS). A disulfide bridge connects residues Cys53 and Cys59. Residue Gly60 is modified to Glycine amide. Residues 63–82 (HRDRSRRQERYGKRLIPVLA) constitute a propeptide that is removed on maturation. The cysteines at positions 87 and 92 are disulfide-linked. Asn94 is modified (asparagine amide). Positions 98-160 (SLSGAGPALS…RDPAASGDLS (63 aa)) are excised as a propeptide. The disordered stretch occupies residues 131–155 (ARHEQQQQLLQQREQRGLESRDPAA). Positions 143–152 (REQRGLESRD) are enriched in basic and acidic residues. A disulfide bond links Cys165 and Cys171. Residue Gly173 is modified to Glycine amide. The propeptide occupies 177 to 207 (TLYSPWLERMNEVADDRSARNALCTRLGWRE).

As to expression, expressed by the venom duct.

It localises to the secreted. In contrast to other members of the CCAP family which are cardio-accelerators, conoCAP-a decreases the heart frequency in Drosophila larvae (26%), rats and zebrafish embryos. It also reduces the blood pressure in rats. It decreases systolic calcium in ventricular cardiac myocytes, indicating that it may act via impairment of intracellular calcium trafficking. Functionally, synthetic conoCAP-b decreases the heart frequency of 23% in Drosophila larvae. In terms of biological role, synthetic conoCAP-c decreases the heart frequency of 12% in Drosophila larvae. This chain is ConoCAP (conoCAP), found in Conus villepinii (Villepin's cone).